The primary structure comprises 452 residues: Retinoid-inducible serine carboxypeptidase (452 aa).

The signal sequence occupies residues 1-28 (MELSRRICLVRLWLLLLSFLLGFSAGSA). N-linked (GlcNAc...) asparagine glycosylation is found at Asn64, Asn102, and Asn126. Ser167 is a catalytic residue. N-linked (GlcNAc...) asparagine glycosylation is found at Asn192 and Asn362. Catalysis depends on residues Asp371 and His431.

This sequence belongs to the peptidase S10 family. As to expression, highly expressed in aorta, bladder, and kidney with much lower levels in all other tissues analyzed. Expression in kidney is restricted to proximal convoluted tubules.

Its subcellular location is the secreted. In terms of biological role, may be involved in vascular wall and kidney homeostasis. In Rattus norvegicus (Rat), this protein is Retinoid-inducible serine carboxypeptidase (Scpep1).